Reading from the N-terminus, the 300-residue chain is Ribosomal protein L11 methyltransferase (300 aa).

The S-adenosyl-L-methionine site is built by Thr152, Gly173, Asp195, and Asn234.

This sequence belongs to the methyltransferase superfamily. PrmA family.

The protein localises to the cytoplasm. It catalyses the reaction L-lysyl-[protein] + 3 S-adenosyl-L-methionine = N(6),N(6),N(6)-trimethyl-L-lysyl-[protein] + 3 S-adenosyl-L-homocysteine + 3 H(+). Its function is as follows. Methylates ribosomal protein L11. This chain is Ribosomal protein L11 methyltransferase, found in Burkholderia mallei (strain NCTC 10247).